The following is a 108-amino-acid chain: MSKKLIALCACPMGLAHTFMAAQALEEAAVEAGYEVKIETQGADGIQNRLTAQDIAEATIIIHSVAVTPEDNERFESRDVYEITLQDAIKNAAGIIKEIEEMIASEQQ.

Residues 1–104 (MSKKLIALCA…IIKEIEEMIA (104 aa)) enclose the PTS EIIB type-2 domain. Residue C11 is the Phosphocysteine intermediate of the active site. At C11 the chain carries Phosphocysteine; by EIIA.

Its subcellular location is the cytoplasm. The catalysed reaction is D-fructose(out) + N(pros)-phospho-L-histidyl-[protein] = D-fructose 1-phosphate(in) + L-histidyl-[protein]. Its function is as follows. The phosphoenolpyruvate-dependent sugar phosphotransferase system (sugar PTS), a major carbohydrate active transport system, catalyzes the phosphorylation of incoming sugar substrates concomitantly with their translocation across the cell membrane. The enzyme II FryABC PTS system is involved in fructose transport. This Escherichia coli O157:H7 protein is PTS system fructose-like EIIB component 1 (fryB).